The following is a 250-amino-acid chain: 5-oxoprolinase subunit A (250 aa).

Belongs to the LamB/PxpA family. In terms of assembly, forms a complex composed of PxpA, PxpB and PxpC.

The enzyme catalyses 5-oxo-L-proline + ATP + 2 H2O = L-glutamate + ADP + phosphate + H(+). Catalyzes the cleavage of 5-oxoproline to form L-glutamate coupled to the hydrolysis of ATP to ADP and inorganic phosphate. The protein is 5-oxoprolinase subunit A of Pseudomonas fluorescens (strain Pf0-1).